Here is a 526-residue protein sequence, read N- to C-terminus: GMP synthase [glutamine-hydrolyzing] (526 aa).

In terms of domain architecture, Glutamine amidotransferase type-1 spans 3 to 199 (RVAIIDFGSQ…FVRIAGCDNN (197 aa)). The Nucleophile role is filled by Cys-83. Catalysis depends on residues His-174 and Glu-176. In terms of domain architecture, GMPS ATP-PPase spans 200–392 (WTVESFLDEQ…LGISDEILMR (193 aa)). 227 to 233 (SGGVDSS) contributes to the ATP binding site.

Homodimer.

The enzyme catalyses XMP + L-glutamine + ATP + H2O = GMP + L-glutamate + AMP + diphosphate + 2 H(+). It functions in the pathway purine metabolism; GMP biosynthesis; GMP from XMP (L-Gln route): step 1/1. Its function is as follows. Catalyzes the synthesis of GMP from XMP. The chain is GMP synthase [glutamine-hydrolyzing] from Ehrlichia chaffeensis (strain ATCC CRL-10679 / Arkansas).